A 183-amino-acid chain; its full sequence is Large ribosomal subunit protein bL32m (183 aa).

Positions 99, 102, 112, and 115 each coordinate Zn(2+).

This sequence belongs to the bacterial ribosomal protein bL32 family. In terms of assembly, component of the mitochondrial large ribosomal subunit (mt-LSU).

The protein localises to the mitochondrion. In terms of biological role, component of the mitochondrial large ribosomal subunit (mt-LSU). The mitochondrial ribosome (mitoribosome) is a large ribonucleoprotein complex responsible for the synthesis of proteins inside mitochondria. This chain is Large ribosomal subunit protein bL32m (mrpl-32), found in Caenorhabditis elegans.